Here is a 363-residue protein sequence, read N- to C-terminus: Uroporphyrinogen decarboxylase (363 aa).

Substrate is bound by residues 36-40 (RQAGR), D85, Y160, S215, and H339.

It belongs to the uroporphyrinogen decarboxylase family. As to quaternary structure, homodimer.

It is found in the cytoplasm. The catalysed reaction is uroporphyrinogen III + 4 H(+) = coproporphyrinogen III + 4 CO2. Its pathway is porphyrin-containing compound metabolism; protoporphyrin-IX biosynthesis; coproporphyrinogen-III from 5-aminolevulinate: step 4/4. Its function is as follows. Catalyzes the decarboxylation of four acetate groups of uroporphyrinogen-III to yield coproporphyrinogen-III. The chain is Uroporphyrinogen decarboxylase from Saccharopolyspora erythraea (strain ATCC 11635 / DSM 40517 / JCM 4748 / NBRC 13426 / NCIMB 8594 / NRRL 2338).